The chain runs to 785 residues: Probably inactive leucine-rich repeat receptor-like protein kinase At5g58150 (785 aa).

Residues 1–21 form the signal peptide; sequence MRLSLWGSLLFFSFFVKHLTS. The Extracellular portion of the chain corresponds to 22 to 436; sequence LDPNTDAYHL…KVNKKNTGLK (415 aa). LRR repeat units lie at residues 64-88, 89-112, 114-136, 138-160, 161-184, 186-208, 210-232, 236-258, 259-283, 284-306, 307-330, 331-355, 357-377, and 379-405; these read SENVLHISASGLDLSGSIPDNTIGK, MSKLQTLDLSGNKITSLPSDLWSL, LLESLNLSSNRISEPLPSNIGNF, SLHTLDLSFNSISGKIPAAISNL, VNLTTLKLHNNDFQFGVPPELVHC, SLLSIDLSSNRLNESLPVGFGSA, PLLKSLNLSRNLFQGSLIGVLHE, TVDLSENRFDGHILQLIPGHKHN, WSSLIHLDLSDNSFVGHIFNGLSSA, HKLGHLNLACNRFRAQEFPEIGK, LSALHYLNLSRTNLTNIIPREISR, LSHLKVLDLSSNNLTGHVPMLSVKN, EVLDLSLNKLDGDIPRPLLEK, and AMMQRFNFSFNNLTFCNPNFSQETIQR. Asn-119 carries N-linked (GlcNAc...) asparagine glycosylation. Residues Asn-162, Asn-198, Asn-216, and Asn-258 are each glycosylated (N-linked (GlcNAc...) asparagine). Asn-314, Asn-319, and Asn-343 each carry an N-linked (GlcNAc...) asparagine glycan. N-linked (GlcNAc...) asparagine glycosylation is found at Asn-385, Asn-390, and Asn-397. A helical membrane pass occupies residues 437–457; sequence IGLGLAISMAFLLIGLLLILV. At 458–785 the chain is on the cytoplasmic side; sequence ALRVRRKSRT…GLLKDISPNY (328 aa). A phosphothreonine mark is found at Thr-510 and Thr-518. One can recognise a Protein kinase domain in the interval 521–785; sequence FDRGTMLWEG…GLLKDISPNY (265 aa). Residues 527-535 and Lys-549 contribute to the ATP site; that span reads LWEGKSGPT. Phosphotyrosine occurs at positions 594 and 683.

This sequence belongs to the protein kinase superfamily. Ser/Thr protein kinase family.

It localises to the cell membrane. The sequence is that of Probably inactive leucine-rich repeat receptor-like protein kinase At5g58150 from Arabidopsis thaliana (Mouse-ear cress).